A 636-amino-acid polypeptide reads, in one-letter code: Probable potassium transport system protein Kup (636 aa).

Transmembrane regions (helical) follow at residues 22 to 42 (VGLL…SPLY), 64 to 84 (ILSL…VMFI), 115 to 135 (LMVI…MITP), 150 to 170 (FDGI…ALFL), 182 to 202 (LFGP…VHGI), 220 to 240 (FFVV…LALT), 261 to 281 (WFIL…ALLL), 293 to 313 (LLAP…ATVI), 351 to 371 (IYIG…VIGF), 383 to 403 (VAVT…MLLL), 408 to 428 (PLLA…FFAA), and 433 to 453 (IVQG…LMST).

It belongs to the HAK/KUP transporter (TC 2.A.72) family.

The protein resides in the cell inner membrane. It catalyses the reaction K(+)(in) + H(+)(in) = K(+)(out) + H(+)(out). In terms of biological role, transport of potassium into the cell. Likely operates as a K(+):H(+) symporter. This Pseudomonas putida (strain ATCC 700007 / DSM 6899 / JCM 31910 / BCRC 17059 / LMG 24140 / F1) protein is Probable potassium transport system protein Kup.